A 335-amino-acid polypeptide reads, in one-letter code: Biotin synthase (335 aa).

A Radical SAM core domain is found at 43 to 269 (YFGKKVKLNM…INPTKEIRIA (227 aa)). [4Fe-4S] cluster contacts are provided by cysteine 61, cysteine 65, and cysteine 68. Positions 104, 137, 197, and 267 each coordinate [2Fe-2S] cluster.

This sequence belongs to the radical SAM superfamily. Biotin synthase family. As to quaternary structure, homodimer. It depends on [4Fe-4S] cluster as a cofactor. [2Fe-2S] cluster is required as a cofactor.

The enzyme catalyses (4R,5S)-dethiobiotin + (sulfur carrier)-SH + 2 reduced [2Fe-2S]-[ferredoxin] + 2 S-adenosyl-L-methionine = (sulfur carrier)-H + biotin + 2 5'-deoxyadenosine + 2 L-methionine + 2 oxidized [2Fe-2S]-[ferredoxin]. It participates in cofactor biosynthesis; biotin biosynthesis; biotin from 7,8-diaminononanoate: step 2/2. Catalyzes the conversion of dethiobiotin (DTB) to biotin by the insertion of a sulfur atom into dethiobiotin via a radical-based mechanism. This is Biotin synthase from Staphylococcus aureus (strain MSSA476).